We begin with the raw amino-acid sequence, 276 residues long: Caspase-6 (276 aa).

Positions 1 to 5 are excised as a propeptide; sequence MTETD. A tri-arginine exosite region spans residues 25–27; sequence KRR. S62 is modified (phosphoserine). Residue H104 is part of the active site. Residues 108-125 form a 130's region region; it reads NHVYAYDAKIEIQTLTGL. C146 is a catalytic residue. The propeptide occupies 163–175; that stretch reads HQTDKLDNVTQVD. S239 bears the Phosphoserine mark. 2 S-palmitoyl cysteine lipidation sites follow: C246 and C259.

Belongs to the peptidase C14A family. As to quaternary structure, heterotetramer that consists of two anti-parallel arranged heterodimers, each one formed by a 18 kDa (p18) and a 11 kDa (p11) subunit. Interacts with BIRC6/bruce. Interacts with RIPK3. Heterotetramer that consists of two anti-parallel arranged heterodimers, each one formed by a 18 kDa (Caspase-6 subunit p18) and a 11 kDa (Caspase-6 subunit p11) subunit. In terms of processing, phosphorylated by NUAK1; phosphorylation inhibits self-activation. Phosphorylation at Ser-239 by AMP-activated protein kinase (PRKAA1 or PRKAA2) inhibits autocleavage, preventing caspase activation, thereby preventing hepatocyte apoptosis. Palmitoylation by ZDHHC17 blocks dimerization and subsequent activation, leading to inhibit the cysteine protease activity. Post-translationally, can be cleaved and activated by different caspases, depending on the context. Cleaved and activated by caspase-8 (CASP8) and subsequently by caspase-3 (CASP3). Can also undergo autoactivation by mediating autocleavage at Asp-162 and Asp-175, while it is not able to cleave its N-terminal disordered prodomain. Cleaved and activated by CASP1, possibly in the context of inflammation. As to expression, highly expressed in lung, liver, kidney, testis, and heart. Lower levels in spleen, skeletal muscle and brain. Expressed in neurons.

The protein localises to the cytoplasm. The protein resides in the nucleus. It catalyses the reaction Strict requirement for Asp at position P1 and has a preferred cleavage sequence of Val-Glu-His-Asp-|-.. Its activity is regulated as follows. During activation, the N-terminal disordered prodomain is removed by cleavage. Concomitantly, double cleavage gives rise to a large 18-kDa and a small 11-kDa subunit. The two large and two small subunits then assemble to form the active CASP6 complex. Can be cleaved and activated by different caspases, depending on the context. Cleaved and activated by caspase-8 (CASP8) and subsequently by caspase-3 (CASP3). Can also undergo autoactivation by mediating autocleavage at Asp-162 and Asp-175, while it is not able to cleave its N-terminal disordered prodomain. Intramolecular cleavage at Asp-175 is a prerequisite for CASP6 self-activation. Cleaved and activated by CASP1 in neurons, possibly in the context of inflammation. Phosphorylation at Ser-239 inhibits autocleavage, preventing caspase activation. Its function is as follows. Cysteine protease that plays essential roles in programmed cell death, axonal degeneration, development and innate immunity. Acts as a non-canonical executioner caspase during apoptosis: localizes in the nucleus and cleaves the nuclear structural protein NUMA1 and lamin A/LMNA thereby inducing nuclear shrinkage and fragmentation. Lamin-A/LMNA cleavage is required for chromatin condensation and nuclear disassembly during apoptotic execution. Acts as a regulator of liver damage by promoting hepatocyte apoptosis: in absence of phosphorylation by AMP-activated protein kinase (AMPK), catalyzes cleavage of BID, leading to cytochrome c release, thereby participating in nonalcoholic steatohepatitis. Cleaves PARK7/DJ-1 in cells undergoing apoptosis. Involved in intrinsic apoptosis by mediating cleavage of RIPK1. Furthermore, cleaves many transcription factors such as NF-kappa-B and cAMP response element-binding protein/CREBBP. Cleaves phospholipid scramblase proteins XKR4 and XKR9. In addition to apoptosis, involved in different forms of programmed cell death. Plays an essential role in defense against viruses by acting as a central mediator of the ZBP1-mediated pyroptosis, apoptosis, and necroptosis (PANoptosis), independently of its cysteine protease activity. PANoptosis is a unique inflammatory programmed cell death, which provides a molecular scaffold that allows the interactions and activation of machinery required for inflammasome/pyroptosis, apoptosis and necroptosis. Mechanistically, interacts with RIPK3 and enhances the interaction between RIPK3 and ZBP1, leading to ZBP1-mediated inflammasome activation and cell death. Plays an essential role in axon degeneration during axon pruning which is the remodeling of axons during neurogenesis but not apoptosis. Regulates B-cell programs both during early development and after antigen stimulation. (Microbial infection) Proteolytically cleaves the N protein of coronaviruses. The cleavage leads to two fragments and modulates coronavirus replication by regulating IFN signaling. The two fragments produced by the cleavage interact with IRF3 inhibiting its nuclear translocation after activation and reduce the expression of IFNB and IFN-stimulated genes. The sequence is that of Caspase-6 from Mus musculus (Mouse).